A 301-amino-acid polypeptide reads, in one-letter code: Multifunctional dioxygenase prhA (301 aa).

Fe cation-binding residues include His130, Asp132, and His214.

The protein belongs to the PhyH family. Homodimer. Fe cation is required as a cofactor.

The catalysed reaction is preaustinoid A1 + 2-oxoglutarate + O2 = berkeleyone B + succinate + CO2 + H2O. It catalyses the reaction berkeleyone B + 2-oxoglutarate + O2 = berkeleydione + succinate + CO2 + H2O. It carries out the reaction preaustinoid A + 2 2-oxoglutarate + 2 O2 = berkeleytrione + 2 succinate + 2 CO2 + H2O. Its pathway is secondary metabolite biosynthesis; terpenoid biosynthesis. Its function is as follows. Multifunctional dioxygenase; part of the gene cluster that mediates the biosynthesis of paraherquonin, a meroterpenoid with a unique, highly congested hexacyclic molecular architecture. The first step of the pathway is the synthesis of 3,5-dimethylorsellinic acid (DMOA) by the polyketide synthase prhL. Synthesis of DMOA is followed by farnesylation by the prenyltransferase prhE, methylesterification by the methyl-transferase prhM, epoxidation of the prenyl chain by the flavin-dependent monooxygenase prhF, and cyclization of the farnesyl moiety by the terpene cyclase prhH, to yield the tetracyclic intermediate, protoaustinoid A. The short chain dehydrogenase prhI then oxidizes the C-3 alcohol group of the terpene cyclase product to transform protoaustinoid A into protoaustinoid B. The FAD-binding monooxygenase prhJ catalyzes the oxidation of protoaustinoid B into preaustinoid A which is further oxidized into preaustinoid A1 by FAD-binding monooxygenase phrK. Finally, prhA leads to berkeleydione via the berkeleyone B intermediate. PrhA is a multifunctional dioxygenase that first desaturates at C5-C6 to form berkeleyone B, followed by rearrangement of the A/B-ring to form the cycloheptadiene moiety in berkeleydione. Berkeleydione serves as the key intermediate for the biosynthesis of paraherquonin as well as many other meroterpenoids. The cytochrome P450 monooxygenases prhB, prhD, and prhN, as well as the isomerase prhC, are probably involved in the late stage of paraherquonin biosynthesis, after the production of berkeleydione. Especially prhC might be a multifunctional enzyme that catalyzes the D-ring expansion via intramolecular methoxy rearrangement, as well as the hydrolysis of the expanded D-ring. The polypeptide is Multifunctional dioxygenase prhA (Penicillium brasilianum).